Consider the following 960-residue polypeptide: Glycine dehydrogenase (decarboxylating) (960 aa).

Lys-709 is modified (N6-(pyridoxal phosphate)lysine).

The protein belongs to the GcvP family. The glycine cleavage system is composed of four proteins: P, T, L and H. Requires pyridoxal 5'-phosphate as cofactor.

The catalysed reaction is N(6)-[(R)-lipoyl]-L-lysyl-[glycine-cleavage complex H protein] + glycine + H(+) = N(6)-[(R)-S(8)-aminomethyldihydrolipoyl]-L-lysyl-[glycine-cleavage complex H protein] + CO2. In terms of biological role, the glycine cleavage system catalyzes the degradation of glycine. The P protein binds the alpha-amino group of glycine through its pyridoxal phosphate cofactor; CO(2) is released and the remaining methylamine moiety is then transferred to the lipoamide cofactor of the H protein. This is Glycine dehydrogenase (decarboxylating) from Edwardsiella ictaluri (strain 93-146).